We begin with the raw amino-acid sequence, 138 residues long: Cysteine desulfuration protein SufE (138 aa).

Cys-51 functions as the Cysteine persulfide intermediate in the catalytic mechanism.

It belongs to the SufE family. In terms of assembly, homodimer. Interacts with SufS.

It localises to the cytoplasm. It participates in cofactor biosynthesis; iron-sulfur cluster biosynthesis. Participates in cysteine desulfuration mediated by SufS. Cysteine desulfuration mobilizes sulfur from L-cysteine to yield L-alanine and constitutes an essential step in sulfur metabolism for biosynthesis of a variety of sulfur-containing biomolecules. Functions as a sulfur acceptor for SufS, by mediating the direct transfer of the sulfur atom from the S-sulfanylcysteine of SufS, an intermediate product of cysteine desulfuration process. The polypeptide is Cysteine desulfuration protein SufE (Shigella sonnei (strain Ss046)).